The chain runs to 546 residues: 2-isopropylmalate synthase (546 aa).

The region spanning Ile8 to Ser271 is the Pyruvate carboxyltransferase domain. Asp17, His208, His210, and Asn244 together coordinate Mn(2+). The regulatory domain stretch occupies residues Gln408–Asn546.

This sequence belongs to the alpha-IPM synthase/homocitrate synthase family. LeuA type 1 subfamily. In terms of assembly, homodimer. It depends on Mn(2+) as a cofactor.

It is found in the cytoplasm. It carries out the reaction 3-methyl-2-oxobutanoate + acetyl-CoA + H2O = (2S)-2-isopropylmalate + CoA + H(+). Its pathway is amino-acid biosynthesis; L-leucine biosynthesis; L-leucine from 3-methyl-2-oxobutanoate: step 1/4. Its function is as follows. Catalyzes the condensation of the acetyl group of acetyl-CoA with 3-methyl-2-oxobutanoate (2-ketoisovalerate) to form 3-carboxy-3-hydroxy-4-methylpentanoate (2-isopropylmalate). This chain is 2-isopropylmalate synthase, found in Prochlorococcus marinus (strain MIT 9515).